The chain runs to 289 residues: 4-diphosphocytidyl-2-C-methyl-D-erythritol kinase (289 aa).

Residue lysine 10 is part of the active site. Residue 94–104 (PVAAGLAGGSS) participates in ATP binding. The active site involves aspartate 136.

The protein belongs to the GHMP kinase family. IspE subfamily.

The enzyme catalyses 4-CDP-2-C-methyl-D-erythritol + ATP = 4-CDP-2-C-methyl-D-erythritol 2-phosphate + ADP + H(+). The protein operates within isoprenoid biosynthesis; isopentenyl diphosphate biosynthesis via DXP pathway; isopentenyl diphosphate from 1-deoxy-D-xylulose 5-phosphate: step 3/6. Its function is as follows. Catalyzes the phosphorylation of the position 2 hydroxy group of 4-diphosphocytidyl-2C-methyl-D-erythritol. This is 4-diphosphocytidyl-2-C-methyl-D-erythritol kinase from Bacillus anthracis.